Here is a 378-residue protein sequence, read N- to C-terminus: Dihydroorotate dehydrogenase (quinone) (378 aa).

FMN contacts are provided by residues 79–83 (PGYDK) and Thr-103. A substrate-binding site is contributed by Lys-83. Residue 128-132 (NRMGF) participates in substrate binding. 2 residues coordinate FMN: Asn-160 and Asn-193. Asn-193 is a substrate binding site. Residue Ser-196 is the Nucleophile of the active site. Residue Asn-198 coordinates substrate. 2 residues coordinate FMN: Lys-231 and Thr-259. 260-261 (NT) is a binding site for substrate. FMN contacts are provided by residues Gly-289, Gly-318, and 339-340 (YT).

This sequence belongs to the dihydroorotate dehydrogenase family. Type 2 subfamily. In terms of assembly, monomer. Requires FMN as cofactor.

Its subcellular location is the cell membrane. It catalyses the reaction (S)-dihydroorotate + a quinone = orotate + a quinol. The protein operates within pyrimidine metabolism; UMP biosynthesis via de novo pathway; orotate from (S)-dihydroorotate (quinone route): step 1/1. Catalyzes the conversion of dihydroorotate to orotate with quinone as electron acceptor. In Trichodesmium erythraeum (strain IMS101), this protein is Dihydroorotate dehydrogenase (quinone).